The sequence spans 504 residues: Lysine--tRNA ligase (504 aa).

The Mg(2+) site is built by glutamate 404 and glutamate 411.

It belongs to the class-II aminoacyl-tRNA synthetase family. In terms of assembly, homodimer. The cofactor is Mg(2+).

It is found in the cytoplasm. It catalyses the reaction tRNA(Lys) + L-lysine + ATP = L-lysyl-tRNA(Lys) + AMP + diphosphate. This chain is Lysine--tRNA ligase, found in Aliarcobacter butzleri (strain RM4018) (Arcobacter butzleri).